Consider the following 122-residue polypeptide: uncharacterized protein (122 aa).

This is an uncharacterized protein from Arabidopsis thaliana (Mouse-ear cress).